A 305-amino-acid polypeptide reads, in one-letter code: Homoserine O-acetyltransferase (305 aa).

Residue cysteine 132 is the Acyl-thioester intermediate of the active site. Substrate-binding residues include lysine 153 and serine 181. The Proton acceptor role is filled by histidine 221. The active site involves glutamate 223. Residue arginine 235 coordinates substrate.

This sequence belongs to the MetA family.

Its subcellular location is the cytoplasm. The catalysed reaction is L-homoserine + acetyl-CoA = O-acetyl-L-homoserine + CoA. It participates in amino-acid biosynthesis; L-methionine biosynthesis via de novo pathway; O-acetyl-L-homoserine from L-homoserine: step 1/1. Functionally, transfers an acetyl group from acetyl-CoA to L-homoserine, forming acetyl-L-homoserine. In Leuconostoc mesenteroides subsp. mesenteroides (strain ATCC 8293 / DSM 20343 / BCRC 11652 / CCM 1803 / JCM 6124 / NCDO 523 / NBRC 100496 / NCIMB 8023 / NCTC 12954 / NRRL B-1118 / 37Y), this protein is Homoserine O-acetyltransferase.